The sequence spans 467 residues: Ribulose bisphosphate carboxylase large chain (467 aa).

Position 5 is an N6,N6,N6-trimethyllysine (Lys-5). Residues Asn-114 and Thr-164 each coordinate substrate. Lys-166 serves as the catalytic Proton acceptor. Substrate is bound at residue Lys-168. Positions 192, 194, and 195 each coordinate Mg(2+). Lys-192 carries the post-translational modification N6-carboxylysine. The active-site Proton acceptor is His-285. Substrate contacts are provided by Arg-286, His-318, and Ser-370.

It belongs to the RuBisCO large chain family. Type I subfamily. As to quaternary structure, heterohexadecamer of 8 large chains and 8 small chains; disulfide-linked. The disulfide link is formed within the large subunit homodimers. Mg(2+) serves as cofactor. Post-translationally, the disulfide bond which can form in the large chain dimeric partners within the hexadecamer appears to be associated with oxidative stress and protein turnover.

Its subcellular location is the plastid. It localises to the chloroplast. The catalysed reaction is 2 (2R)-3-phosphoglycerate + 2 H(+) = D-ribulose 1,5-bisphosphate + CO2 + H2O. It catalyses the reaction D-ribulose 1,5-bisphosphate + O2 = 2-phosphoglycolate + (2R)-3-phosphoglycerate + 2 H(+). RuBisCO catalyzes two reactions: the carboxylation of D-ribulose 1,5-bisphosphate, the primary event in carbon dioxide fixation, as well as the oxidative fragmentation of the pentose substrate in the photorespiration process. Both reactions occur simultaneously and in competition at the same active site. The chain is Ribulose bisphosphate carboxylase large chain from Jasminum simplicifolium subsp. suavissimum (Native jasmine).